The following is a 115-amino-acid chain: Large ribosomal subunit protein bL19 (115 aa).

Belongs to the bacterial ribosomal protein bL19 family.

Its function is as follows. This protein is located at the 30S-50S ribosomal subunit interface and may play a role in the structure and function of the aminoacyl-tRNA binding site. This chain is Large ribosomal subunit protein bL19, found in Nitratidesulfovibrio vulgaris (strain ATCC 29579 / DSM 644 / CCUG 34227 / NCIMB 8303 / VKM B-1760 / Hildenborough) (Desulfovibrio vulgaris).